Reading from the N-terminus, the 385-residue chain is Methylthioribose-1-phosphate isomerase (385 aa).

D255 serves as the catalytic Proton donor.

Belongs to the eIF-2B alpha/beta/delta subunits family. MtnA subfamily.

It localises to the cytoplasm. Its subcellular location is the nucleus. It carries out the reaction 5-(methylsulfanyl)-alpha-D-ribose 1-phosphate = 5-(methylsulfanyl)-D-ribulose 1-phosphate. Its pathway is amino-acid biosynthesis; L-methionine biosynthesis via salvage pathway; L-methionine from S-methyl-5-thio-alpha-D-ribose 1-phosphate: step 1/6. Its function is as follows. Catalyzes the interconversion of methylthioribose-1-phosphate (MTR-1-P) into methylthioribulose-1-phosphate (MTRu-1-P). In Aspergillus clavatus (strain ATCC 1007 / CBS 513.65 / DSM 816 / NCTC 3887 / NRRL 1 / QM 1276 / 107), this protein is Methylthioribose-1-phosphate isomerase (mri1).